Consider the following 61-residue polypeptide: Metallothionein-1 (61 aa).

Residue Met-1 is modified to N-acetylmethionine. Positions 1–29 are beta; sequence MDPNCSCATGVSCTCADSCKCKECKCTSC. The a divalent metal cation site is built by Cys-5, Cys-7, Cys-13, Cys-15, Cys-19, Cys-21, Cys-24, Cys-26, Cys-29, Cys-33, Cys-34, Cys-36, Cys-37, Cys-41, Cys-44, Cys-48, Cys-50, Cys-57, Cys-59, and Cys-60. The tract at residues 30–61 is alpha; that stretch reads KKSCCSCCPVGCAKCAQGCVCKGASEKCNCCA.

It belongs to the metallothionein superfamily. Type 1 family.

Metallothioneins have a high content of cysteine residues that bind various heavy metals; these proteins are transcriptionally regulated by both heavy metals and glucocorticoids. This chain is Metallothionein-1 (MT1), found in Chlorocebus aethiops (Green monkey).